The following is a 689-amino-acid chain: Glycine--tRNA ligase beta subunit (689 aa).

The protein belongs to the class-II aminoacyl-tRNA synthetase family. In terms of assembly, tetramer of two alpha and two beta subunits.

The protein resides in the cytoplasm. It carries out the reaction tRNA(Gly) + glycine + ATP = glycyl-tRNA(Gly) + AMP + diphosphate. This Shigella dysenteriae serotype 1 (strain Sd197) protein is Glycine--tRNA ligase beta subunit.